Consider the following 320-residue polypeptide: Chorion protein S36 (320 aa).

The first 18 residues, 1–18 (MNCFLFTLFFVAAPLATA), serve as a signal peptide directing secretion. 5 repeat units span residues 178–181 (AAPV), 258–261 (AAPA), 266–269 (AAPA), 274–277 (AAPA), and A290. A disordered region spans residues 259–320 (APAQSYNAAP…YGSAPPASGY (62 aa)).

Belongs to the chorion protein S36 family.

It localises to the secreted. Chorion membrane (egg shell) protein; plays a role in protecting the egg from the environment. This Ceratitis capitata (Mediterranean fruit fly) protein is Chorion protein S36 (Cp36).